A 351-amino-acid chain; its full sequence is Phosphate acyltransferase (351 aa).

This sequence belongs to the PlsX family. As to quaternary structure, homodimer. Probably interacts with PlsY.

The protein localises to the cytoplasm. It carries out the reaction a fatty acyl-[ACP] + phosphate = an acyl phosphate + holo-[ACP]. The protein operates within lipid metabolism; phospholipid metabolism. Functionally, catalyzes the reversible formation of acyl-phosphate (acyl-PO(4)) from acyl-[acyl-carrier-protein] (acyl-ACP). This enzyme utilizes acyl-ACP as fatty acyl donor, but not acyl-CoA. The polypeptide is Phosphate acyltransferase (Gloeothece citriformis (strain PCC 7424) (Cyanothece sp. (strain PCC 7424))).